A 124-amino-acid polypeptide reads, in one-letter code: Small ribosomal subunit protein uS12 (124 aa).

Position 89 is a 3-methylthioaspartic acid (aspartate 89). The tract at residues 104–124 is disordered; that stretch reads TAGVKDRRQSRSKYGAKTPKE.

The protein belongs to the universal ribosomal protein uS12 family. In terms of assembly, part of the 30S ribosomal subunit. Contacts proteins S8 and S17. May interact with IF1 in the 30S initiation complex.

Its function is as follows. With S4 and S5 plays an important role in translational accuracy. Interacts with and stabilizes bases of the 16S rRNA that are involved in tRNA selection in the A site and with the mRNA backbone. Located at the interface of the 30S and 50S subunits, it traverses the body of the 30S subunit contacting proteins on the other side and probably holding the rRNA structure together. The combined cluster of proteins S8, S12 and S17 appears to hold together the shoulder and platform of the 30S subunit. This chain is Small ribosomal subunit protein uS12, found in Parasynechococcus marenigrum (strain WH8102).